The chain runs to 79 residues: Cyclotide phyb-A (79 aa).

A propeptide spanning residues 1–43 (MVGVNSLRSALYLIVLILFVQLTYFSDARVMDVDLSRAFLPLT) is cleaved from the precursor. The segment at residues 44-73 (GIGCGESCVWIPCVSAAIGCSCSNKICYRN) is a cross-link (cyclopeptide (Gly-Asn)). Cystine bridges form between Cys47–Cys63, Cys51–Cys65, and Cys56–Cys70. Residues 74-79 (GIIPKK) constitute a propeptide that is removed on maturation.

In terms of processing, this is a cyclic peptide. Post-translationally, contains 3 disulfide bonds. In terms of tissue distribution, expressed in midvein, lamina and periphery of leaves (at protein level).

In terms of biological role, probably participates in a plant defense mechanism. This chain is Cyclotide phyb-A, found in Petunia hybrida (Petunia).